The following is a 509-amino-acid chain: Probable triacylglyceride transporter ML0556 (509 aa).

Transmembrane regions (helical) follow at residues 48–68 (RITWIVTMYLLGYIAAMPLLS), 78–98 (LLLQVSLAGFAIGSVMTALAG), 112–132 (IQGVASGALLPITLALGADLW), 146–166 (AAQELGSVLGPLYGIFIVWLF), 171–191 (YVFWINIPLTAIAMLMIQVSL), 203–223 (VDVVGGVLLAIALGLVVIGLY), 232–252 (VLPSYGVPVLVGGIVATVAFA), 272–292 (PFLSALGASVAAGAALMVTLV), 309–329 (AAGLLVWFLIALPIGAVLGGW), 339–359 (MTFVGLLITAGGYWLISHWPV), 381–403 (LLVAGLGLGLVIGPLSSATLRVV), 410–430 (IASAAVVVARMTGMLIGVAAL), and 477–497 (IFMITAIVCVIGALLGLLISS).

The protein belongs to the major facilitator superfamily.

It is found in the cell inner membrane. Functionally, in association with lipoprotein LprG probably transports triacylglycerides (TAG) across the inner cell membrane into the periplasm; TAG probably regulates lipid metabolism and growth regulation. May be an efflux transporter and involved in maintaining correct cell wall permeability. Probably required with LprG for normal surface localization of lipoarabinomannan (LAM). This Mycobacterium leprae (strain TN) protein is Probable triacylglyceride transporter ML0556.